Consider the following 169-residue polypeptide: Peptide methionine sulfoxide reductase MsrA (169 aa).

The active site involves cysteine 10.

Belongs to the MsrA Met sulfoxide reductase family.

It carries out the reaction L-methionyl-[protein] + [thioredoxin]-disulfide + H2O = L-methionyl-(S)-S-oxide-[protein] + [thioredoxin]-dithiol. The enzyme catalyses [thioredoxin]-disulfide + L-methionine + H2O = L-methionine (S)-S-oxide + [thioredoxin]-dithiol. In terms of biological role, has an important function as a repair enzyme for proteins that have been inactivated by oxidation. Catalyzes the reversible oxidation-reduction of methionine sulfoxide in proteins to methionine. This is Peptide methionine sulfoxide reductase MsrA from Streptococcus pyogenes serotype M12 (strain MGAS2096).